The sequence spans 38 residues: Large ribosomal subunit protein bL36 (38 aa).

It belongs to the bacterial ribosomal protein bL36 family.

In Anaeromyxobacter dehalogenans (strain 2CP-1 / ATCC BAA-258), this protein is Large ribosomal subunit protein bL36.